A 278-amino-acid polypeptide reads, in one-letter code: HTH-type transcriptional activator RhaS (278 aa).

The HTH araC/xylS-type domain occupies 174-272 (NLLLAWLEDH…NWSPRDIRQG (99 aa)). 2 consecutive DNA-binding regions (H-T-H motif) follow at residues 191 to 212 (DAVADQFSLSLRTLHRQLKQQT) and 239 to 262 (VTDIAYRCGFSDSNHFSTLFHREF).

As to quaternary structure, binds DNA as a dimer.

The protein localises to the cytoplasm. Activates expression of the rhaBAD and rhaT operons. The polypeptide is HTH-type transcriptional activator RhaS (Shigella boydii serotype 18 (strain CDC 3083-94 / BS512)).